Here is a 326-residue protein sequence, read N- to C-terminus: uncharacterized protein (326 aa).

This is an uncharacterized protein from Escherichia coli (strain K12).